A 337-amino-acid chain; its full sequence is Visual pigment-like receptor peropsin (337 aa).

The Extracellular segment spans residues 1-26 (MLSEASDFNSSGSRSEGSVFSRTEHS). An N-linked (GlcNAc...) asparagine glycan is attached at N9. The helical transmembrane segment at 27 to 49 (VIAAYLIVAGITSILSNVVVLGI) threads the bilayer. Residues 50–61 (FIKYKELRTPTN) are Cytoplasmic-facing. A helical membrane pass occupies residues 62-87 (AVIINLAFTDIGVSSIGYPMSAASDL). Over 88–101 (HGSWKFGHAGCQIY) the chain is Extracellular. C98 and C175 are joined by a disulfide. A helical membrane pass occupies residues 102–121 (AGLNIFFGMVSIGLLTVVAM). At 122–140 (DRYLTISCPDVGRRMTTNT) the chain is on the cytoplasmic side. A helical transmembrane segment spans residues 141-164 (YLSMILGAWINGLFWALMPIIGWA). At 165-188 (SYAPDPTGATCTINWRNNDTSFVS) the chain is on the extracellular side. Residue N182 is glycosylated (N-linked (GlcNAc...) asparagine). A helical transmembrane segment spans residues 189–212 (YTMMVIVVNFIVPLTVMFYCYYHV). Residues 213–240 (SRSLRLYAASDCTAHLHRDWADQADVTK) are Cytoplasmic-facing. The chain crosses the membrane as a helical span at residues 241–264 (MSVIMILMFLLAWSPYSIVCLWAC). At 265–272 (FGNPKKIP) the chain is on the extracellular side. Residues 273–297 (PSMAIIAPLFAKSSTFYNPCIYVAA) traverse the membrane as a helical segment. K284 is modified (N6-(retinylidene)lysine). Over 298-337 (HKKFRKAMLAMFKCQPHLAVPEPSTLPMDMPQSSLAPVRI) the chain is Cytoplasmic.

This sequence belongs to the G-protein coupled receptor 1 family. Opsin subfamily. In terms of tissue distribution, found only in the eye, where it is localized to the retinal pigment epithelium (RPE). In the RPE, it is localized to the microvilli that surround the photoreceptor outer segments.

The protein localises to the membrane. In terms of biological role, may play a role in rpe physiology either by detecting light directly or by monitoring the concentration of retinoids or other photoreceptor-derived compounds. This is Visual pigment-like receptor peropsin (Rrh) from Mus musculus (Mouse).